Reading from the N-terminus, the 207-residue chain is C-type lectin domain family 2 member D (207 aa).

At 1-41 (MCVTKASLPMLSPTGSPQEVEVGKILQGKRHGTISPESCAK) the chain is on the cytoplasmic side. 2 positions are modified to phosphoserine: Ser-7 and Ser-12. A helical; Signal-anchor for type II membrane protein membrane pass occupies residues 42 to 62 (LYCYYGVIMVLTVAVIALSVA). Residues 63–207 (LSATKTEQIP…LHCQTPFFPS (145 aa)) lie on the Extracellular side of the membrane. Residues Cys-80 and Cys-91 are joined by a disulfide bond. The C-type lectin domain occupies 87–202 (VENKCFYFSE…LNSYSLHCQT (116 aa)). Asn-100 carries N-linked (GlcNAc...) asparagine glycosylation.

As to quaternary structure, homodimer; disulfide-linked. N-glycosylated. Detected in fetal heart, brain, lung, chondrocytes, perichondrium and osteoblasts, and in adult splenocytes, thymocytes, lymph-node cells, osteoblasts, growth plate chondrocytes and skeletal muscle overlying the bone (at protein level). Ubiquitous. Detected in thymus, bone marrow, lung, gut, heart, skeletal muscle, ovary, spleen, ileum, liver and kidney.

The protein localises to the cell membrane. Its function is as follows. Receptor for KLRB1B that protects target cells against natural killer cell-mediated lysis. Inhibits osteoclast formation. Binds high molecular weight sulfated glycosaminoglycans. This Mus musculus (Mouse) protein is C-type lectin domain family 2 member D (Clec2d).